Reading from the N-terminus, the 314-residue chain is tRNA-cytidine(32) 2-sulfurtransferase (314 aa).

A PP-loop motif motif is present at residues 46–51 (SGGKDS). Residues cysteine 121, cysteine 124, and cysteine 212 each coordinate [4Fe-4S] cluster.

This sequence belongs to the TtcA family. As to quaternary structure, homodimer. Mg(2+) is required as a cofactor. [4Fe-4S] cluster serves as cofactor.

Its subcellular location is the cytoplasm. The catalysed reaction is cytidine(32) in tRNA + S-sulfanyl-L-cysteinyl-[cysteine desulfurase] + AH2 + ATP = 2-thiocytidine(32) in tRNA + L-cysteinyl-[cysteine desulfurase] + A + AMP + diphosphate + H(+). The protein operates within tRNA modification. Its function is as follows. Catalyzes the ATP-dependent 2-thiolation of cytidine in position 32 of tRNA, to form 2-thiocytidine (s(2)C32). The sulfur atoms are provided by the cysteine/cysteine desulfurase (IscS) system. The sequence is that of tRNA-cytidine(32) 2-sulfurtransferase from Nitrosomonas europaea (strain ATCC 19718 / CIP 103999 / KCTC 2705 / NBRC 14298).